Here is a 1578-residue protein sequence, read N- to C-terminus: Pentafunctional AROM polypeptide (1578 aa).

The 3-dehydroquinate synthase stretch occupies residues 1-384 (MTGPTKISIL…YEPRASVVPN (384 aa)). NAD(+) contacts are provided by residues 44–46 (DTN), 81–84 (EVSK), 114–116 (GGV), and D119. Residue R130 coordinates 7-phospho-2-dehydro-3-deoxy-D-arabino-heptonate. Position 139–140 (139–140 (TT)) interacts with NAD(+). 7-phospho-2-dehydro-3-deoxy-D-arabino-heptonate contacts are provided by D146 and K152. Residue K161 participates in NAD(+) binding. N162 is a 7-phospho-2-dehydro-3-deoxy-D-arabino-heptonate binding site. NAD(+)-binding positions include 179–182 (FLET) and N190. E194 is a binding site for Zn(2+). 7-phospho-2-dehydro-3-deoxy-D-arabino-heptonate is bound by residues 194-197 (EVIK) and K250. The active-site Proton acceptor; for 3-dehydroquinate synthase activity is E260. 7-phospho-2-dehydro-3-deoxy-D-arabino-heptonate contacts are provided by residues 264 to 268 (RNLLN) and H271. H271 is a Zn(2+) binding site. The Proton acceptor; for 3-dehydroquinate synthase activity role is filled by H275. The 7-phospho-2-dehydro-3-deoxy-D-arabino-heptonate site is built by H287 and K356. H287 contributes to the Zn(2+) binding site. An EPSP synthase region spans residues 397 to 842 (VYPGVSPASE…WDTLRQKFAV (446 aa)). The active-site For EPSP synthase activity is C824. The tract at residues 864-1055 (SASVFIIGMR…KKKQHSFFVS (192 aa)) is shikimate kinase. 871-878 (GMRGAGKT) contributes to the ATP binding site. The 3-dehydroquinase stretch occupies residues 1056 to 1276 (LTLPDVRGAD…AAPGQLSATD (221 aa)). Residue H1179 is the Proton acceptor; for 3-dehydroquinate dehydratase activity of the active site. K1207 functions as the Schiff-base intermediate with substrate; for 3-dehydroquinate dehydratase activity in the catalytic mechanism. Positions 1289–1578 (KKRFALFGSP…YERARAIVLG (290 aa)) are shikimate dehydrogenase.

This sequence in the N-terminal section; belongs to the sugar phosphate cyclases superfamily. Dehydroquinate synthase family. The protein in the 2nd section; belongs to the EPSP synthase family. It in the 3rd section; belongs to the shikimate kinase family. In the 4th section; belongs to the type-I 3-dehydroquinase family. This sequence in the C-terminal section; belongs to the shikimate dehydrogenase family. As to quaternary structure, homodimer. Zn(2+) serves as cofactor.

The protein resides in the cytoplasm. The catalysed reaction is 7-phospho-2-dehydro-3-deoxy-D-arabino-heptonate = 3-dehydroquinate + phosphate. It carries out the reaction 3-dehydroquinate = 3-dehydroshikimate + H2O. It catalyses the reaction shikimate + NADP(+) = 3-dehydroshikimate + NADPH + H(+). The enzyme catalyses shikimate + ATP = 3-phosphoshikimate + ADP + H(+). The catalysed reaction is 3-phosphoshikimate + phosphoenolpyruvate = 5-O-(1-carboxyvinyl)-3-phosphoshikimate + phosphate. Its pathway is metabolic intermediate biosynthesis; chorismate biosynthesis; chorismate from D-erythrose 4-phosphate and phosphoenolpyruvate: step 2/7. It participates in metabolic intermediate biosynthesis; chorismate biosynthesis; chorismate from D-erythrose 4-phosphate and phosphoenolpyruvate: step 3/7. It functions in the pathway metabolic intermediate biosynthesis; chorismate biosynthesis; chorismate from D-erythrose 4-phosphate and phosphoenolpyruvate: step 4/7. The protein operates within metabolic intermediate biosynthesis; chorismate biosynthesis; chorismate from D-erythrose 4-phosphate and phosphoenolpyruvate: step 5/7. Its pathway is metabolic intermediate biosynthesis; chorismate biosynthesis; chorismate from D-erythrose 4-phosphate and phosphoenolpyruvate: step 6/7. The AROM polypeptide catalyzes 5 consecutive enzymatic reactions in prechorismate polyaromatic amino acid biosynthesis. This is Pentafunctional AROM polypeptide from Neosartorya fischeri (strain ATCC 1020 / DSM 3700 / CBS 544.65 / FGSC A1164 / JCM 1740 / NRRL 181 / WB 181) (Aspergillus fischerianus).